A 713-amino-acid polypeptide reads, in one-letter code: MTASVSNTQNKLNELLDAIRQEFLQVSQEANTYRLQNQKDYDFKMNQQLAEMQQIRNTVYELELTHRKMKDAYEEEIKHLKLGLEQRDHQIASLTVQQQRQQQQQQQVQQHLQQQQQQLAAASASVPVAQQPPATTSATATPAANTTTGSPSAFPVQASRPNLVGSQLPTTTLPVVSSNAQQQLPQQQLQQQQLQQQQPPPQVSVAPLSNTAINGSPTSKETTTLPSVKAPESTLKETEPENNNTSKINDTGSATTATTTTATETEIKPKEEDATPASLHQDHYLVPYNQRANHSKPIPPFLLDLDSQSVPDALKKQTNDYYILYNPALPREIDVELHKSLDHTSVVCCVKFSNDGEYLATGCNKTTQVYRVSDGSLVARLSDDSAANNHRNSITENNTTTSTDNNTMTTTTTTTITTTAMTSAAELAKDVENLNTSSSPSSDLYIRSVCFSPDGKFLATGAEDRLIRIWDIENRKIVMILQGHEQDIYSLDYFPSGDKLVSGSGDRTVRIWDLRTGQCSLTLSIEDGVTTVAVSPGDGKYIAAGSLDRAVRVWDSETGFLVERLDSENESGTGHKDSVYSVVFTRDGQSVVSGSLDRSVKLWNLQNANNKSDSKTPNSGTCEVTYIGHKDFVLSVATTQNDEYILSGSKDRGVLFWDKKSGNPLLMLQGHRNSVISVAVANGSPLGPEYNVFATGSGDCKARIWKYKKIAPN.

A compositionally biased stretch (low complexity) spans 124-153 (ASVPVAQQPPATTSATATPAANTTTGSPSA). The tract at residues 124–278 (ASVPVAQQPP…PKEEDATPAS (155 aa)) is disordered. The span at 164-180 (VGSQLPTTTLPVVSSNA) shows a compositional bias: polar residues. Over residues 181 to 197 (QQQLPQQQLQQQQLQQQ) the composition is skewed to low complexity. 2 stretches are compositionally biased toward polar residues: residues 207 to 226 (PLSN…TTLP) and 241 to 253 (ENNN…DTGS). Residues 254–264 (ATTATTTTATE) are compositionally biased toward low complexity. The WD 1 repeat unit spans residues 342-371 (DHTSVVCCVKFSNDGEYLATGCNKTTQVYR). A disordered region spans residues 387–409 (ANNHRNSITENNTTTSTDNNTMT). Residues 392–409 (NSITENNTTTSTDNNTMT) are compositionally biased toward low complexity. S439 is subject to Phosphoserine. 6 WD repeats span residues 441–471 (SSDL…RIWD), 483–513 (GHEQ…RIWD), 524–555 (SIED…RVWD), 574–604 (GHKD…KLWN), 628–658 (GHKD…LFWD), and 670–706 (GHRN…RIWK).

It belongs to the WD repeat TUP1 family. Associates with CYC8/SSN6 to form the CYC8-TUP1 (or TUP1-SSN6) corepressor complex that is composed of 4 copies of TUP1 and one copy of CYC8. Interacts with histone H3, histone H4, MATALPHA2, RFX1, SKO1, PGD1, HDA1, HDA2, HOS1, HOS2 and RPD3.

It is found in the nucleus. Acts as a component of the CYC8-TUP1 corepressor complex which is involved in the repression of many genes in a wide variety of physiological processes including heme-regulated and catabolite repressed genes. May also be involved in the derepression of at least some target genes. The complex is recruited to target genes by interaction with DNA-bound transcriptional repressors, like MATALPHA2, MIG1, RFX1 and SKO1. The complex recruits histone deacetylases to produce a repressive chromatin structure, interacts with hypoacetylated N-terminal tails of histones H3 and H4 that have been programmed for repression by the action of histone deacetylases and interferes directly with the transcriptional machinery by associating with the RNA polymerase II mediator complex. This Saccharomyces cerevisiae (strain ATCC 204508 / S288c) (Baker's yeast) protein is General transcriptional corepressor TUP1 (TUP1).